We begin with the raw amino-acid sequence, 375 residues long: MNLNFKLNLKEIERYDLVILLMAVALTCFGVVMVYSASSVMATKKFHDGFYFLKRQGIYAILGCAAMIVAMRIDYRQWREYAVPILLGCLLLLLLVFIPGIGGAAKGASRWIRFPGFNLQPSELAKIALIMYMAYSLDKKQEKVKFFSTGFAPYMVLLAILLAILLKQHDLGSALTMGGVAILMLFAAGTRPRYILGMVVLTLPFLYFLVMNVDYRRRRILAYLNPWEDPTNTGFQIIQSWLAFGNGGIIGQGLGEGKQKMFFLPEAHTDFILSVVGEELGLIGVIVIAAMFLMLVLRGVRVALMAQDPFGRFLAFGIVTLLGIQAFVNMGVVTGLLPTKGLALPFISYGGSSLIVTLFAVGILLNVSTRMKGTP.

Residues 1-16 (MNLNFKLNLKEIERYD) lie on the Cytoplasmic side of the membrane. Residues 17–37 (LVILLMAVALTCFGVVMVYSA) form a helical membrane-spanning segment. At 38 to 49 (SSVMATKKFHDG) the chain is on the periplasmic side. Residues 50-70 (FYFLKRQGIYAILGCAAMIVA) traverse the membrane as a helical segment. Topologically, residues 71-81 (MRIDYRQWREY) are cytoplasmic. The helical transmembrane segment at 82–102 (AVPILLGCLLLLLLVFIPGIG) threads the bilayer. The Periplasmic portion of the chain corresponds to 103 to 145 (GAAKGASRWIRFPGFNLQPSELAKIALIMYMAYSLDKKQEKVK). A helical transmembrane segment spans residues 146–166 (FFSTGFAPYMVLLAILLAILL). Topologically, residues 167 to 169 (KQH) are cytoplasmic. The helical transmembrane segment at 170–190 (DLGSALTMGGVAILMLFAAGT) threads the bilayer. At 191 to 193 (RPR) the chain is on the periplasmic side. Residues 194–214 (YILGMVVLTLPFLYFLVMNVD) form a helical membrane-spanning segment. Over 215–233 (YRRRRILAYLNPWEDPTNT) the chain is Cytoplasmic. Residues 234–254 (GFQIIQSWLAFGNGGIIGQGL) traverse the membrane as a helical segment. Over 255–279 (GEGKQKMFFLPEAHTDFILSVVGEE) the chain is Periplasmic. The helical transmembrane segment at 280–300 (LGLIGVIVIAAMFLMLVLRGV) threads the bilayer. Topologically, residues 301–312 (RVALMAQDPFGR) are cytoplasmic. Residues 313–333 (FLAFGIVTLLGIQAFVNMGVV) form a helical membrane-spanning segment. The Periplasmic portion of the chain corresponds to 334–343 (TGLLPTKGLA). Residues 344 to 364 (LPFISYGGSSLIVTLFAVGIL) form a helical membrane-spanning segment. The Cytoplasmic portion of the chain corresponds to 365–375 (LNVSTRMKGTP).

This sequence belongs to the SEDS family. FtsW subfamily.

The protein resides in the cell inner membrane. The enzyme catalyses [GlcNAc-(1-&gt;4)-Mur2Ac(oyl-L-Ala-gamma-D-Glu-L-Lys-D-Ala-D-Ala)](n)-di-trans,octa-cis-undecaprenyl diphosphate + beta-D-GlcNAc-(1-&gt;4)-Mur2Ac(oyl-L-Ala-gamma-D-Glu-L-Lys-D-Ala-D-Ala)-di-trans,octa-cis-undecaprenyl diphosphate = [GlcNAc-(1-&gt;4)-Mur2Ac(oyl-L-Ala-gamma-D-Glu-L-Lys-D-Ala-D-Ala)](n+1)-di-trans,octa-cis-undecaprenyl diphosphate + di-trans,octa-cis-undecaprenyl diphosphate + H(+). It functions in the pathway cell wall biogenesis; peptidoglycan biosynthesis. Peptidoglycan polymerase that is essential for cell division. This is Probable peptidoglycan glycosyltransferase FtsW from Geobacter metallireducens (strain ATCC 53774 / DSM 7210 / GS-15).